The sequence spans 338 residues: Tryptophan--tRNA ligase (338 aa).

Residues 11 to 13 and 19 to 20 contribute to the ATP site; these read QPS and GN. The short motif at 12 to 20 is the 'HIGH' region element; sequence PSGELSIGN. Aspartate 135 provides a ligand contact to L-tryptophan. Residues 147–149, valine 189, and 198–202 each bind ATP; these read GSD and KMSKS. The short motif at 198–202 is the 'KMSKS' region element; sequence KMSKS.

It belongs to the class-I aminoacyl-tRNA synthetase family. In terms of assembly, homodimer.

It is found in the cytoplasm. It catalyses the reaction tRNA(Trp) + L-tryptophan + ATP = L-tryptophyl-tRNA(Trp) + AMP + diphosphate + H(+). In terms of biological role, catalyzes the attachment of tryptophan to tRNA(Trp). The sequence is that of Tryptophan--tRNA ligase from Aliivibrio fischeri (strain ATCC 700601 / ES114) (Vibrio fischeri).